The primary structure comprises 320 residues: ATP-dependent 6-phosphofructokinase isozyme 1 (320 aa).

Gly-12 lines the ATP pocket. ADP-binding positions include 22 to 26 and 55 to 60; these read RGVVR and RYSVSD. ATP is bound by residues 73–74 and 103–106; these read RF and GDGS. Asp-104 provides a ligand contact to Mg(2+). 126-128 contacts substrate; that stretch reads TID. The Proton acceptor role is filled by Asp-128. Arg-155 contacts ADP. Residues Arg-163 and 170 to 172 contribute to the substrate site; that span reads MGR. Residues 186-188, Lys-212, and 214-216 each bind ADP; these read GCE and KKH. Residues Glu-223, Arg-244, and 250–253 each bind substrate; that span reads HIQR.

This sequence belongs to the phosphofructokinase type A (PFKA) family. ATP-dependent PFK group I subfamily. Prokaryotic clade 'B1' sub-subfamily. As to quaternary structure, homotetramer. It depends on Mg(2+) as a cofactor.

The protein localises to the cytoplasm. It carries out the reaction beta-D-fructose 6-phosphate + ATP = beta-D-fructose 1,6-bisphosphate + ADP + H(+). It participates in carbohydrate degradation; glycolysis; D-glyceraldehyde 3-phosphate and glycerone phosphate from D-glucose: step 3/4. With respect to regulation, allosterically activated by ADP and other diphosphonucleosides, and allosterically inhibited by phosphoenolpyruvate. Its function is as follows. Catalyzes the phosphorylation of D-fructose 6-phosphate to fructose 1,6-bisphosphate by ATP, the first committing step of glycolysis. The sequence is that of ATP-dependent 6-phosphofructokinase isozyme 1 from Shigella boydii serotype 18 (strain CDC 3083-94 / BS512).